Consider the following 488-residue polypeptide: Germacrene A acid 8-beta-hydroxylase (488 aa).

Residues 2–22 (ELFTIFSIVVSSLILFTFWSL) form a helical; Signal-anchor for type II membrane protein membrane-spanning segment. The N-linked (GlcNAc...) asparagine glycan is linked to Asn-407. Cys-429 is a heme binding site.

Belongs to the cytochrome P450 family. The cofactor is heme. Expressed in leaf primordia.

Its subcellular location is the membrane. The catalysed reaction is germacra-1(10),4,11(13)-trien-12-oate + reduced [NADPH--hemoprotein reductase] + O2 = 8beta-hydroxygermacra-1(10),4,11(13)-trien-12-oate + oxidized [NADPH--hemoprotein reductase] + H2O + H(+). Its pathway is secondary metabolite biosynthesis; terpenoid biosynthesis. Functionally, involved in the biosynthesis of germacrene-derived sesquiterpene lactones. Hydroxylates germacrene A acid to 8-beta-hydroxy-germacrene A acid. Unlike 6-alpha-hydroxy-germacrene A acid, this compound cannot undergo spontaneous lactonization. This Helianthus annuus (Common sunflower) protein is Germacrene A acid 8-beta-hydroxylase.